Reading from the N-terminus, the 93-residue chain is Small ribosomal subunit protein uS17 (93 aa).

Belongs to the universal ribosomal protein uS17 family. In terms of assembly, part of the 30S ribosomal subunit.

In terms of biological role, one of the primary rRNA binding proteins, it binds specifically to the 5'-end of 16S ribosomal RNA. The protein is Small ribosomal subunit protein uS17 of Rhodococcus jostii (strain RHA1).